The chain runs to 744 residues: Collagen alpha-1(VIII) chain (744 aa).

Residues 1 to 27 (MAVQPGPPQLLQVLLTISLGSIRLIQA) form the signal peptide. A nonhelical region (NC2) region spans residues 29 to 117 (AYYGIKPLPP…GKEIPLASLR (89 aa)). Over residues 101–110 (KEAVPKKGKE) the composition is skewed to basic and acidic residues. Disordered stretches follow at residues 101-434 (KEAV…PGLQ) and 463-584 (EAGH…QGEY). The segment at 118 to 571 (GEQGPRGEPG…PGPPGPPGPP (454 aa)) is triple-helical region. Residues 128-137 (PRGPPGPPGL) are compositionally biased toward pro residues. The span at 168-190 (KPGAMGMPGAKGEIGPKGEIGPM) shows a compositional bias: low complexity. The span at 203–217 (GLPGIGKPGGPGLPG) shows a compositional bias: gly residues. A compositionally biased stretch (pro residues) spans 288–298 (KPGPPGEPGPQ). Residues 328 to 337 (GFPGGKGEQG) show a composition bias toward gly residues. Residues 389–403 (PGEPGLPGIPGPMGP) show a composition bias toward pro residues. The span at 411 to 420 (GPKGEGGIVG) shows a compositional bias: gly residues. 2 stretches are compositionally biased toward low complexity: residues 469 to 506 (LPGL…TGPS) and 540 to 556 (LHGP…QGQP). Positions 558-579 (LPGPPGPPGPPGPPAVMPPTPA) are enriched in pro residues. The interval 572–744 (AVMPPTPAPQ…SFSGYLLYPM (173 aa)) is nonhelical region (NC1). Positions 611 to 744 (PAYEMPAFTA…SFSGYLLYPM (134 aa)) constitute a C1q domain.

In terms of assembly, homotrimers, or heterotrimers in association with alpha 2(VIII) type collagens. Four homotrimers can form a tetrahedron stabilized by central interacting C-terminal NC1 trimers. Prolines at the third position of the tripeptide repeating unit (G-X-Y) are hydroxylated in some or all of the chains.

The protein resides in the secreted. Its subcellular location is the extracellular space. It is found in the extracellular matrix. The protein localises to the basement membrane. Macromolecular component of the subendothelium. Major component of the Descemet's membrane (basement membrane) of corneal endothelial cells. Also a component of the endothelia of blood vessels. Necessary for migration and proliferation of vascular smooth muscle cells and thus, has a potential role in the maintenance of vessel wall integrity and structure, in particular in atherogenesis. In Gallus gallus (Chicken), this protein is Collagen alpha-1(VIII) chain (COL8A1).